Consider the following 88-residue polypeptide: uncharacterized protein (88 aa).

Residues 30–49 (VPEVMHLCGLSRSTIYELIR) constitute a DNA-binding region (H-T-H motif).

To E.coli prophage CP4-57 regulatory protein alpA.

This is an uncharacterized protein from Escherichia coli (Bacteriophage P4).